Reading from the N-terminus, the 338-residue chain is Ketol-acid reductoisomerase (NADP(+)) (338 aa).

The region spanning 1 to 181 (MQVYYDKDCD…GGGRTGIIET (181 aa)) is the KARI N-terminal Rossmann domain. NADP(+) is bound by residues 24–27 (FGSQ), R47, S50, S52, and 82–85 (DEFQ). Residue H107 is part of the active site. G133 is a binding site for NADP(+). In terms of domain architecture, KARI C-terminal knotted spans 182-327 (TFRDECETDL…RKLRAMMPWI (146 aa)). Mg(2+) is bound by residues D190, E194, E226, and E230. S251 serves as a coordination point for substrate.

This sequence belongs to the ketol-acid reductoisomerase family. Mg(2+) serves as cofactor.

The catalysed reaction is (2R)-2,3-dihydroxy-3-methylbutanoate + NADP(+) = (2S)-2-acetolactate + NADPH + H(+). It catalyses the reaction (2R,3R)-2,3-dihydroxy-3-methylpentanoate + NADP(+) = (S)-2-ethyl-2-hydroxy-3-oxobutanoate + NADPH + H(+). Its pathway is amino-acid biosynthesis; L-isoleucine biosynthesis; L-isoleucine from 2-oxobutanoate: step 2/4. The protein operates within amino-acid biosynthesis; L-valine biosynthesis; L-valine from pyruvate: step 2/4. Involved in the biosynthesis of branched-chain amino acids (BCAA). Catalyzes an alkyl-migration followed by a ketol-acid reduction of (S)-2-acetolactate (S2AL) to yield (R)-2,3-dihydroxy-isovalerate. In the isomerase reaction, S2AL is rearranged via a Mg-dependent methyl migration to produce 3-hydroxy-3-methyl-2-ketobutyrate (HMKB). In the reductase reaction, this 2-ketoacid undergoes a metal-dependent reduction by NADPH to yield (R)-2,3-dihydroxy-isovalerate. The polypeptide is Ketol-acid reductoisomerase (NADP(+)) (Hydrogenovibrio crunogenus (strain DSM 25203 / XCL-2) (Thiomicrospira crunogena)).